We begin with the raw amino-acid sequence, 103 residues long: Phorbol-12-myristate-13-acetate-induced protein 1 (103 aa).

2 consecutive short sequence motifs (BH3) follow at residues 27-35 (LRKIGDKVY) and 78-86 (LRRIGDKVN). The tract at residues 90–99 (KLLNLISKLF) is required for mitochondrial location.

This sequence belongs to the PMAIP1 family. As to quaternary structure, interacts with MCL1. Interacts with BCL2A1. Interacts with BAX. Interacts with BCL2L10. As to expression, detected in thymocytes after irradiation with X-rays. Not detectable in untreated thymocytes (at protein level). Detected in embryonic neural precursor cells of the telencephalon Constitutively expressed at low levels in adult brain, testis, thymus, spleen, lung and kidney.

It localises to the mitochondrion. In terms of biological role, promotes activation of caspases and apoptosis. Promotes mitochondrial membrane changes and efflux of apoptogenic proteins from the mitochondria. Contributes to p53/TP53-dependent apoptosis after radiation exposure. Promotes proteasomal degradation of MCL1. Competes with BIM/BCL2L11 for binding to MCL1 and can displace BIM/BCL2L11 from its binding site on MCL1. Competes with BAK1 for binding to MCL1 and can displace BAK1 from its binding site on MCL1. The protein is Phorbol-12-myristate-13-acetate-induced protein 1 (Pmaip1) of Mus musculus (Mouse).